The following is a 528-amino-acid chain: MEIFNFGQASDHRRLPDFGSGGFLQSLDTNPFLKNQYYNNSVEALELCKKLNKMGISCDMSIWTKPEEPFRVDPGDFGAKTLHESFGFDQNLTGASQIHDGFRNFSSVRVQNNNFHGVSPSPGLLGLQDSFNPNGFEEMMAFKDHKDFLLDHINEPIKRSPFLRGNDAFKGSLMFEGIRVSQILAAMEGSGASYPDEPKINGGLPLDLVSMVEIYGSVNLMARDQIGCRALQKLVEEGTVLDSKVIFLEIIDHVVELSMDPLGNYIVQKLLVVSDEEQRTMIVSVLTSKPRELIKICLNTNGTRVIQKMIKTVKTKQQIALVKSALEPGFLVLVNDSNGYHVLQSCLEFLVPNDNKFVVEAATEYCAQLATHQYGCYVLQCSLINTVGLQHERLVAEISRDSLRLSQDPFGNYVVQCLIDQQVSSVNLLLPFRTHCIELATQKFSSHVIEKCLRKYPESRAEIVRELLSYPNFEQLLQDPYANYVIQTALSVTKGAVRARLVEKVKRFGKLQSNPYCKKIFSKTILKK.

The region spanning 188 to 528 is the PUM-HD domain; that stretch reads EGSGASYPDE…KIFSKTILKK (341 aa). Pumilio repeat units follow at residues 213–248, 249–284, 285–323, 325–360, 361–396, 397–433, 434–465, and 466–503; these read EIYG…VIFL, EIID…MIVS, VLTS…ALVK, ALEP…FVVE, AATE…RLVA, EISR…LPFR, THCI…EIVR, and ELLS…RLVE.

The protein resides in the cytoplasm. Its function is as follows. Sequence-specific RNA-binding protein that regulates translation and mRNA stability by binding the 3'-UTR of target mRNAs. In Arabidopsis thaliana (Mouse-ear cress), this protein is Putative pumilio homolog 10 (APUM10).